A 469-amino-acid chain; its full sequence is Glutamate--tRNA ligase 1 (469 aa).

The 'HIGH' region motif lies at 10–20 (PSPTGYLHIGG). Zn(2+)-binding residues include Cys99, Cys101, Cys126, and Asp128. Residues 237–241 (RLSKR) carry the 'KMSKS' region motif. Lys240 contacts ATP.

It belongs to the class-I aminoacyl-tRNA synthetase family. Glutamate--tRNA ligase type 1 subfamily. In terms of assembly, monomer. Zn(2+) serves as cofactor.

It is found in the cytoplasm. It carries out the reaction tRNA(Glu) + L-glutamate + ATP = L-glutamyl-tRNA(Glu) + AMP + diphosphate. Catalyzes the attachment of glutamate to tRNA(Glu) in a two-step reaction: glutamate is first activated by ATP to form Glu-AMP and then transferred to the acceptor end of tRNA(Glu). The chain is Glutamate--tRNA ligase 1 from Coxiella burnetii (strain CbuK_Q154) (Coxiella burnetii (strain Q154)).